Reading from the N-terminus, the 354-residue chain is Uroporphyrinogen decarboxylase (354 aa).

Substrate contacts are provided by residues 25 to 29 (RQAGR), D75, Y152, T207, and H330.

This sequence belongs to the uroporphyrinogen decarboxylase family. As to quaternary structure, homodimer.

The protein resides in the cytoplasm. The catalysed reaction is uroporphyrinogen III + 4 H(+) = coproporphyrinogen III + 4 CO2. The protein operates within porphyrin-containing compound metabolism; protoporphyrin-IX biosynthesis; coproporphyrinogen-III from 5-aminolevulinate: step 4/4. Catalyzes the decarboxylation of four acetate groups of uroporphyrinogen-III to yield coproporphyrinogen-III. The sequence is that of Uroporphyrinogen decarboxylase from Xanthomonas oryzae pv. oryzae (strain MAFF 311018).